A 119-amino-acid polypeptide reads, in one-letter code: DNA-binding protein inhibitor ID-3 (119 aa).

In terms of domain architecture, bHLH spans 28–80 (RGKGPAAEEPLSLLDDMNHCYSRLRELVPGVPRGTQLSQVEILQRVIDYILDL).

In terms of assembly, homodimer, and heterodimer with other HLH proteins. Interacts with COPS5 and COPS7A. Interacts with IFI204. Interacts with GATA4 and NKX2-5. Interacts with ANKRD2; both proteins cooperate in myoblast differentiation. Interacts with CLOCK and BMAL1. As to expression, expressed abundantly in lung, kidney and adrenal gland, but not in adult brain.

Its subcellular location is the nucleus. Functionally, transcriptional regulator (lacking a basic DNA binding domain) which negatively regulates the basic helix-loop-helix (bHLH) transcription factors by forming heterodimers and inhibiting their DNA binding and transcriptional activity. Implicated in regulating a variety of cellular processes, including cellular growth, senescence, differentiation, apoptosis, angiogenesis, and neoplastic transformation. Involved in myogenesis by inhibiting skeletal muscle and cardiac myocyte differentiation and promoting muscle precursor cells proliferation. Inhibits the binding of E2A-containing protein complexes to muscle creatine kinase E-box enhancer. Regulates the circadian clock by repressing the transcriptional activator activity of the CLOCK-BMAL1 heterodimer. This is DNA-binding protein inhibitor ID-3 (ID3) from Homo sapiens (Human).